The primary structure comprises 596 residues: Isocitrate dehydrogenase kinase/phosphatase (596 aa).

ATP-binding positions include 316–322 (APGIRGM) and K337. The active site involves D372.

This sequence belongs to the AceK family.

It localises to the cytoplasm. It carries out the reaction L-seryl-[isocitrate dehydrogenase] + ATP = O-phospho-L-seryl-[isocitrate dehydrogenase] + ADP + H(+). Functionally, bifunctional enzyme which can phosphorylate or dephosphorylate isocitrate dehydrogenase (IDH) on a specific serine residue. This is a regulatory mechanism which enables bacteria to bypass the Krebs cycle via the glyoxylate shunt in response to the source of carbon. When bacteria are grown on glucose, IDH is fully active and unphosphorylated, but when grown on acetate or ethanol, the activity of IDH declines drastically concomitant with its phosphorylation. This chain is Isocitrate dehydrogenase kinase/phosphatase, found in Cronobacter sakazakii (strain ATCC BAA-894) (Enterobacter sakazakii).